A 355-amino-acid chain; its full sequence is D-alanine--D-alanine ligase (355 aa).

In terms of domain architecture, ATP-grasp spans 143–350 (KKIFSHLEIP…IDQLVAKLVD (208 aa)). Residue 178 to 233 (IEKLKLPVFVKPANSGSSLGISKAKTRSEIIKALQKAWEIDSRIVIEEGLDVRELE) participates in ATP binding. Positions 303, 317, and 319 each coordinate Mg(2+).

The protein belongs to the D-alanine--D-alanine ligase family. Requires Mg(2+) as cofactor. The cofactor is Mn(2+).

It is found in the cytoplasm. It carries out the reaction 2 D-alanine + ATP = D-alanyl-D-alanine + ADP + phosphate + H(+). It functions in the pathway cell wall biogenesis; peptidoglycan biosynthesis. In terms of biological role, cell wall formation. This is D-alanine--D-alanine ligase from Prochlorococcus marinus subsp. pastoris (strain CCMP1986 / NIES-2087 / MED4).